We begin with the raw amino-acid sequence, 297 residues long: Phosphatidylserine decarboxylase proenzyme (297 aa).

Catalysis depends on charge relay system; for autoendoproteolytic cleavage activity residues Asp100, His157, and Ser263. Ser263 acts as the Schiff-base intermediate with substrate; via pyruvic acid; for decarboxylase activity in catalysis. Ser263 carries the post-translational modification Pyruvic acid (Ser); by autocatalysis.

This sequence belongs to the phosphatidylserine decarboxylase family. PSD-B subfamily. Prokaryotic type I sub-subfamily. Heterodimer of a large membrane-associated beta subunit and a small pyruvoyl-containing alpha subunit. It depends on pyruvate as a cofactor. In terms of processing, is synthesized initially as an inactive proenzyme. Formation of the active enzyme involves a self-maturation process in which the active site pyruvoyl group is generated from an internal serine residue via an autocatalytic post-translational modification. Two non-identical subunits are generated from the proenzyme in this reaction, and the pyruvate is formed at the N-terminus of the alpha chain, which is derived from the carboxyl end of the proenzyme. The autoendoproteolytic cleavage occurs by a canonical serine protease mechanism, in which the side chain hydroxyl group of the serine supplies its oxygen atom to form the C-terminus of the beta chain, while the remainder of the serine residue undergoes an oxidative deamination to produce ammonia and the pyruvoyl prosthetic group on the alpha chain. During this reaction, the Ser that is part of the protease active site of the proenzyme becomes the pyruvoyl prosthetic group, which constitutes an essential element of the active site of the mature decarboxylase.

The protein resides in the cell membrane. It carries out the reaction a 1,2-diacyl-sn-glycero-3-phospho-L-serine + H(+) = a 1,2-diacyl-sn-glycero-3-phosphoethanolamine + CO2. It functions in the pathway phospholipid metabolism; phosphatidylethanolamine biosynthesis; phosphatidylethanolamine from CDP-diacylglycerol: step 2/2. Catalyzes the formation of phosphatidylethanolamine (PtdEtn) from phosphatidylserine (PtdSer). This is Phosphatidylserine decarboxylase proenzyme from Haemophilus ducreyi (strain 35000HP / ATCC 700724).